A 323-amino-acid chain; its full sequence is 2-methylene-furan-3-one reductase (323 aa).

NADP(+)-binding positions include Lys-59, 174–175, 197–200, Tyr-216, Ile-254, 265–267, and 312–313; these read GV, STKK, FVL, and RA. Lys-59 is a binding site for substrate.

This sequence belongs to the zinc-containing alcohol dehydrogenase family. Quinone oxidoreductase subfamily. Monomer. In terms of processing, the N-terminus is blocked. In terms of tissue distribution, expressed in parenchyma tissues of red fruits. Not found in vascular tissues. Also detected in the achenes.

It carries out the reaction 4-hydroxy-2,5-dimethyl-furan-3(2H)-one + NADP(+) = 4-hydroxy-5-methyl-2-methylenefuran-3(2H)-one + NADPH + H(+). Functionally, enone oxidoreductase involved in the biosynthesis of 4-hydroxy-2,5-dimethyl-3(2H)-furanone (HDMF or furaneol), the key flavor compound in strawberries. Can use both NADH and NADPH as the electron donor. The sequence is that of 2-methylene-furan-3-one reductase (EO) from Fragaria ananassa (Strawberry).